The sequence spans 420 residues: Protein BDLF2 (420 aa).

Disordered stretches follow at residues methionine 1–glutamate 21 and alanine 64–arginine 129. The Intravirion segment spans residues methionine 1–cysteine 184. The segment covering threonine 90–asparagine 108 has biased composition (low complexity). A helical; Signal-anchor for type II membrane protein membrane pass occupies residues phenylalanine 185–alanine 205. At phenylalanine 206 to glutamine 420 the chain is on the virion surface side. N-linked (GlcNAc...) asparagine; by host glycans are attached at residues asparagine 258, asparagine 264, asparagine 300, asparagine 304, asparagine 371, and asparagine 384.

This sequence belongs to the herpesviridae BDLF2 family. In terms of assembly, interacts with BMRF2.

Its subcellular location is the virion membrane. Functionally, rearranges cellular actin to increase intercellular contacts and thereby promote virus cell-to-cell spreading. Induce the outgrowth of long, branched plasma membrane fronds to create intercellular network for virion traffic. The fronds are actin based and RhoA-dependent. This Homo sapiens (Human) protein is Protein BDLF2.